Consider the following 685-residue polypeptide: N(6)-adenosine-methyltransferase MT-A70-like (685 aa).

S-adenosyl-L-methionine-binding positions include 464-465 and Asp482; that span reads DI. The interval 552 to 565 is positively charged region required for RNA-binding; the sequence is RIIRTGRTGHWLNH. S-adenosyl-L-methionine is bound by residues Lys599, 622-625, and 635-636; these read RMHN and NQ. The segment at 657–685 is disordered; it reads EIDVQPPSPPRASAMETDNEPMAIDSITA. At Ser664 the chain carries Phosphoserine.

It belongs to the MT-A70-like family. As to quaternary structure, interacts with FIP37. Interacts with MTB. Associates with MTB, FIP37, VIR and HAKAI to form the m6A writer complex which is essential for adenosine methylation at specific mRNA sequences.

The protein resides in the nucleus. The enzyme catalyses an adenosine in mRNA + S-adenosyl-L-methionine = an N(6)-methyladenosine in mRNA + S-adenosyl-L-homocysteine + H(+). Functionally, catalytic subunit of the N6-methyltransferase complex, a multiprotein complex that mediates N6-methyladenosine (m6A) methylation at the 5'-[AG]GAC-3' consensus sites of some mRNAs. Associates with MTB, FIP37, VIR and HAKAI to form the m6A writer complex which is essential for adenosine methylation at specific mRNA sequences. N6-methyladenosine (m6A) plays a role in mRNA stability, processing, translation efficiency and editing. This Arabidopsis thaliana (Mouse-ear cress) protein is N(6)-adenosine-methyltransferase MT-A70-like.